An 81-amino-acid chain; its full sequence is Photosystem I iron-sulfur center (81 aa).

2 4Fe-4S ferredoxin-type domains span residues 2–31 and 39–68; these read AHSV…MIPW and IASA…VRVY. [4Fe-4S] cluster is bound by residues Cys-11, Cys-14, Cys-17, Cys-21, Cys-48, Cys-51, Cys-54, and Cys-58.

In terms of assembly, the eukaryotic PSI reaction center is composed of at least 11 subunits. The cofactor is [4Fe-4S] cluster.

It localises to the plastid. It is found in the chloroplast thylakoid membrane. It carries out the reaction reduced [plastocyanin] + hnu + oxidized [2Fe-2S]-[ferredoxin] = oxidized [plastocyanin] + reduced [2Fe-2S]-[ferredoxin]. Apoprotein for the two 4Fe-4S centers FA and FB of photosystem I (PSI); essential for photochemical activity. FB is the terminal electron acceptor of PSI, donating electrons to ferredoxin. The C-terminus interacts with PsaA/B/D and helps assemble the protein into the PSI complex. Required for binding of PsaD and PsaE to PSI. PSI is a plastocyanin-ferredoxin oxidoreductase, converting photonic excitation into a charge separation, which transfers an electron from the donor P700 chlorophyll pair to the spectroscopically characterized acceptors A0, A1, FX, FA and FB in turn. The protein is Photosystem I iron-sulfur center of Zygnema circumcarinatum (Green alga).